We begin with the raw amino-acid sequence, 398 residues long: Probable L-tyrosine/L-aspartate decarboxylase (398 aa).

Lys242 carries the post-translational modification N6-(pyridoxal phosphate)lysine.

Belongs to the group II decarboxylase family. MfnA subfamily. Pyridoxal 5'-phosphate is required as a cofactor.

The enzyme catalyses L-tyrosine + H(+) = tyramine + CO2. The catalysed reaction is L-aspartate + H(+) = beta-alanine + CO2. It participates in cofactor biosynthesis; methanofuran biosynthesis. It functions in the pathway cofactor biosynthesis; coenzyme A biosynthesis. Functionally, catalyzes the decarboxylation of L-tyrosine to produce tyramine for methanofuran biosynthesis. Can also catalyze the decarboxylation of L-aspartate to produce beta-alanine for coenzyme A (CoA) biosynthesis. The chain is Probable L-tyrosine/L-aspartate decarboxylase from Methanosarcina mazei (strain ATCC BAA-159 / DSM 3647 / Goe1 / Go1 / JCM 11833 / OCM 88) (Methanosarcina frisia).